The following is a 134-amino-acid chain: uncharacterized protein (134 aa).

Residues 4–24 (NLLILLSLLLVVVAIMWWLYE) form a helical membrane-spanning segment.

It localises to the membrane. This is an uncharacterized protein from Invertebrate iridescent virus 6 (IIV-6).